The primary structure comprises 271 residues: Extracellular metalloprotease ARB_05317 (271 aa).

Residues 1 to 19 (MRFSVLLTGLAAAGSIATA) form the signal peptide. Asparagine 136 is a glycosylation site (N-linked (GlcNAc...) asparagine). Histidine 185 provides a ligand contact to Zn(2+). Residue glutamate 186 is part of the active site. Position 189 (histidine 189) interacts with Zn(2+). The N-linked (GlcNAc...) asparagine glycan is linked to asparagine 200. Cysteine 222 and cysteine 248 are joined by a disulfide.

Belongs to the peptidase M43B family.

It localises to the secreted. In terms of biological role, secreted metalloproteinase that allows assimilation of proteinaceous substrates. Plays a pivotal role as a pathogenicity determinant during infections and contributes to the ability of the pathogen to persist within the mammalian host. This is Extracellular metalloprotease ARB_05317 from Arthroderma benhamiae (strain ATCC MYA-4681 / CBS 112371) (Trichophyton mentagrophytes).